Reading from the N-terminus, the 552-residue chain is Leucine-rich repeat-containing protein 31 (552 aa).

A disordered region spans residues 1 to 65 (MSQTRKKTSS…SETAKPLSSE (65 aa)). A compositionally biased stretch (basic and acidic residues) spans 31 to 41 (ESRKEDNDLKT). Residues 42-58 (SDSQPSDWIQKTATSET) are compositionally biased toward polar residues. 9 LRR repeats span residues 227 to 246 (SLEV…LNSI), 255 to 275 (NLKV…KILD), 283 to 293 (ELRKLDLSCNK), 311 to 331 (HLQV…MSLT), 339 to 360 (NLQE…NLLS), 367 to 387 (ALKS…TALA), 395 to 415 (ALEV…KLLL), 423 to 443 (SLQV…ALLA), and 453 to 475 (KLQK…MFCQ).

The polypeptide is Leucine-rich repeat-containing protein 31 (LRRC31) (Homo sapiens (Human)).